Consider the following 200-residue polypeptide: Somatotropin (200 aa).

The first 22 residues, 1–22 (MARVLVVLSVVVASLFFSQGAT), serve as a signal peptide directing secretion. Position 38 (histidine 38) interacts with Zn(2+). A disulfide bridge connects residues cysteine 71 and cysteine 173. Glutamate 182 contacts Zn(2+). A disulfide bond links cysteine 190 and cysteine 198.

It belongs to the somatotropin/prolactin family.

It localises to the secreted. Functionally, growth hormone plays an important role in growth control and is involved in the regulation of several anabolic processes. Implicated as an osmoregulatory substance important for seawater adaptation. This Heteropneustes fossilis (Stinging catfish) protein is Somatotropin (gh).